The sequence spans 363 residues: Holliday junction branch migration complex subunit RuvB (363 aa).

The interval 1-32 (MAIQTDSFAAAPAPSSGSTRRLISAAPTSPNE) is disordered. Residues 7–18 (SFAAAPAPSSGS) show a composition bias toward low complexity. The tract at residues 13–200 (APSSGSTRRL…FGIVARLEFY (188 aa)) is large ATPase domain (RuvB-L). ATP contacts are provided by residues Leu39, Arg40, Gly81, Lys84, Thr85, Thr86, 147 to 149 (EDY), Arg190, Tyr200, and Arg237. Thr85 lines the Mg(2+) pocket. The segment at 201 to 271 (TPEELVRIVT…IAELALTMLD (71 aa)) is small ATPAse domain (RuvB-S). The tract at residues 274–363 (PRGFDVMDRK…GPVGSDLFEG (90 aa)) is head domain (RuvB-H). DNA is bound by residues Arg329 and Arg334.

The protein belongs to the RuvB family. As to quaternary structure, homohexamer. Forms an RuvA(8)-RuvB(12)-Holliday junction (HJ) complex. HJ DNA is sandwiched between 2 RuvA tetramers; dsDNA enters through RuvA and exits via RuvB. An RuvB hexamer assembles on each DNA strand where it exits the tetramer. Each RuvB hexamer is contacted by two RuvA subunits (via domain III) on 2 adjacent RuvB subunits; this complex drives branch migration. In the full resolvosome a probable DNA-RuvA(4)-RuvB(12)-RuvC(2) complex forms which resolves the HJ.

It localises to the cytoplasm. The enzyme catalyses ATP + H2O = ADP + phosphate + H(+). In terms of biological role, the RuvA-RuvB-RuvC complex processes Holliday junction (HJ) DNA during genetic recombination and DNA repair, while the RuvA-RuvB complex plays an important role in the rescue of blocked DNA replication forks via replication fork reversal (RFR). RuvA specifically binds to HJ cruciform DNA, conferring on it an open structure. The RuvB hexamer acts as an ATP-dependent pump, pulling dsDNA into and through the RuvAB complex. RuvB forms 2 homohexamers on either side of HJ DNA bound by 1 or 2 RuvA tetramers; 4 subunits per hexamer contact DNA at a time. Coordinated motions by a converter formed by DNA-disengaged RuvB subunits stimulates ATP hydrolysis and nucleotide exchange. Immobilization of the converter enables RuvB to convert the ATP-contained energy into a lever motion, pulling 2 nucleotides of DNA out of the RuvA tetramer per ATP hydrolyzed, thus driving DNA branch migration. The RuvB motors rotate together with the DNA substrate, which together with the progressing nucleotide cycle form the mechanistic basis for DNA recombination by continuous HJ branch migration. Branch migration allows RuvC to scan DNA until it finds its consensus sequence, where it cleaves and resolves cruciform DNA. This chain is Holliday junction branch migration complex subunit RuvB, found in Leptothrix cholodnii (strain ATCC 51168 / LMG 8142 / SP-6) (Leptothrix discophora (strain SP-6)).